Consider the following 145-residue polypeptide: MAERPEDLNLPNAVITRIIKEALPDGVNISKEARSAISRAASVFVLYATSCANNFAMKGKRKTLNASDVLSAMEEMEFQRFVTPLKEALEAYRREQKGKKEASEQKKKDKDKKDCEEQDKSREEEDEDEERLDEEEQNEEEEVDN.

Position 2 is an N-acetylalanine (Ala2). The residue at position 83 (Thr83) is a Phosphothreonine. Residues 85–144 (LKEALEAYRREQKGKKEASEQKKKDKDKKDCEEQDKSREEEDEDEERLDEEEQNEEEEVD) are a coiled coil. A compositionally biased stretch (basic and acidic residues) spans 93–123 (RREQKGKKEASEQKKKDKDKKDCEEQDKSRE). Residues 93–145 (RREQKGKKEASEQKKKDKDKKDCEEQDKSREEEDEDEERLDEEEQNEEEEVDN) form a disordered region. Ser121 carries the phosphoserine modification. Positions 124–145 (EEDEDEERLDEEEQNEEEEVDN) are enriched in acidic residues.

Component of the DNA polymerase epsilon complex consisting of four subunits: the catalytic subunit POLE and the accessory subunits POLE2, POLE3 and POLE4. Interaction with POLE4 is a prerequisite for further binding with POLE and POLE2. Heterodimer with CHRAC1; binds to DNA. Component of the CHRAC ISWI chromatin remodeling complex at least composed of SMARCA5/SNF2H, BAZ1A/ACF1, CHRAC1 and POLE3; the complex preferentially binds DNA through the CHRAC1-POLE3 heterodimer and possesses ATP-dependent nucleosome-remodeling activity. Within the complex, the heterodimer with CHRAC1 interacts with SMARCA5/SNF2H; the interaction is direct and enhances nucleosome sliding activity by the SMARCA5/SNF2H and BAZ1A/ACF1 interaction. Within the complex, the heterodimer with CHRAC1 interacts with BAZ1A/ACF1; the interactions are direct.

The protein localises to the nucleus. Its function is as follows. Accessory component of the DNA polymerase epsilon complex. Participates in DNA repair and in chromosomal DNA replication. Forms a complex with CHRAC1 and binds naked DNA, which is then incorporated into chromatin, aided by the nucleosome-remodeling activity of ISWI/SNF2H and ACF1. Does not enhance nucleosome sliding activity of the ACF-5 ISWI chromatin remodeling complex. The protein is DNA polymerase epsilon subunit 3 (Pole3) of Rattus norvegicus (Rat).